The sequence spans 80 residues: Acyl carrier protein (80 aa).

The region spanning 4–79 (EEILQKVCSI…DAVKFIEEKK (76 aa)) is the Carrier domain. O-(pantetheine 4'-phosphoryl)serine is present on serine 39.

The protein belongs to the acyl carrier protein (ACP) family. Post-translationally, 4'-phosphopantetheine is transferred from CoA to a specific serine of apo-ACP by AcpS. This modification is essential for activity because fatty acids are bound in thioester linkage to the sulfhydryl of the prosthetic group.

Its subcellular location is the cytoplasm. The protein operates within lipid metabolism; fatty acid biosynthesis. In terms of biological role, carrier of the growing fatty acid chain in fatty acid biosynthesis. In Prochlorococcus marinus subsp. pastoris (strain CCMP1986 / NIES-2087 / MED4), this protein is Acyl carrier protein.